Reading from the N-terminus, the 33-residue chain is Cecropin-B (33 aa).

Lysine 21 is modified (5-hydroxylysine).

Monomer. Hemolymph.

The protein resides in the secreted. Functionally, cecropins have lytic and antibacterial activity against several Gram-positive and Gram-negative bacteria. Also has activity against fungi. This chain is Cecropin-B, found in Heliothis virescens (Tobacco budworm moth).